A 179-amino-acid polypeptide reads, in one-letter code: 3-hydroxyanthranilate 3,4-dioxygenase (179 aa).

O2 is bound at residue Arg-47. Fe cation-binding residues include His-51, Glu-57, and His-96. Glu-57 lines the substrate pocket. Arg-100 and Glu-110 together coordinate substrate. 4 residues coordinate Fe cation: Cys-125, Cys-128, Cys-162, and Cys-165.

The protein belongs to the 3-HAO family. Fe(2+) serves as cofactor.

It catalyses the reaction 3-hydroxyanthranilate + O2 = (2Z,4Z)-2-amino-3-carboxymuconate 6-semialdehyde. It functions in the pathway cofactor biosynthesis; NAD(+) biosynthesis; quinolinate from L-kynurenine: step 3/3. Its function is as follows. Catalyzes the oxidative ring opening of 3-hydroxyanthranilate to 2-amino-3-carboxymuconate semialdehyde, which spontaneously cyclizes to quinolinate. This is 3-hydroxyanthranilate 3,4-dioxygenase from Bacillus cereus (strain 03BB102).